Consider the following 764-residue polypeptide: 5-methyltetrahydropteroyltriglutamate--homocysteine methyltransferase (764 aa).

Residues 16–19 and Lys117 each bind 5-methyltetrahydropteroyltri-L-glutamate; that span reads RELK. L-homocysteine contacts are provided by residues 442–444 and Glu495; that span reads IGS. Residues 442–444 and Glu495 contribute to the L-methionine site; that span reads IGS. Residues 526–527 and Trp572 each bind 5-methyltetrahydropteroyltri-L-glutamate; that span reads RC. Asp610 is an L-homocysteine binding site. Residue Asp610 participates in L-methionine binding. Residue Glu616 participates in 5-methyltetrahydropteroyltri-L-glutamate binding. Zn(2+)-binding residues include His652, Cys654, and Glu676. His705 acts as the Proton donor in catalysis. Cys737 serves as a coordination point for Zn(2+).

It belongs to the vitamin-B12 independent methionine synthase family. It depends on Zn(2+) as a cofactor.

It catalyses the reaction 5-methyltetrahydropteroyltri-L-glutamate + L-homocysteine = tetrahydropteroyltri-L-glutamate + L-methionine. It participates in amino-acid biosynthesis; L-methionine biosynthesis via de novo pathway; L-methionine from L-homocysteine (MetE route): step 1/1. In terms of biological role, catalyzes the transfer of a methyl group from 5-methyltetrahydrofolate to homocysteine resulting in methionine formation. The chain is 5-methyltetrahydropteroyltriglutamate--homocysteine methyltransferase from Bordetella petrii (strain ATCC BAA-461 / DSM 12804 / CCUG 43448).